Reading from the N-terminus, the 548-residue chain is Natural resistance-associated macrophage protein 1 (548 aa).

Positions 1 to 12 are enriched in polar residues; the sequence is MSGDTGTPNQGG. The segment at 1-38 is disordered; that stretch reads MSGDTGTPNQGGTRYGSISSPPSPGPQQAPPGGTYLSE. Over 1–55 the chain is Cytoplasmic; it reads MSGDTGTPNQGGTRYGSISSPPSPGPQQAPPGGTYLSEKIPIPDTESGAFSLRKL. Residues 56-73 traverse the membrane as a helical segment; the sequence is WAFTGPGFLMSIAFLDPG. Residues 74-82 are Extracellular-facing; that stretch reads NIESDLQAG. A helical membrane pass occupies residues 83-102; sequence AVAGFKLLWVLLWATVLGLL. The Cytoplasmic segment spans residues 103–139; that stretch reads CQRLAARLGVVTGKDLGEVCHLYYPKVPRTLLWLTIE. Residues 140–160 form a helical membrane-spanning segment; it reads LAIVGSDMQEVIGTAIAFSLL. Residues 161–164 lie on the Extracellular side of the membrane; it reads SAGR. A helical transmembrane segment spans residues 165-184; it reads IPLWGGVLITIVDTFFFLFL. The Cytoplasmic portion of the chain corresponds to 185–193; it reads DNYGLRKLE. A helical transmembrane segment spans residues 194-214; the sequence is AFFGFLITIMALTFGYEYVVA. The Extracellular portion of the chain corresponds to 215 to 237; it reads RPAQGALLQGLFLPSCPGCGQPE. A helical membrane pass occupies residues 238–256; sequence LLQAVGIVGAIIMPHNIYL. Residues 257–284 lie on the Cytoplasmic side of the membrane; sequence HSSLVKSREVDRSRRADIREANMYFLIE. The helical transmembrane segment at 285–304 threads the bilayer; the sequence is ATIALSVSFFINLFVMAVFG. The Extracellular segment spans residues 305–346; the sequence is QAFYKQTNQAAFNICANSSLHDYATIFPRDNLTVAVDIYQGG. N-linked (GlcNAc...) asparagine glycosylation is found at N321 and N335. Residues 347–366 form a helical membrane-spanning segment; it reads VILGCLFGPAALYIWAVGLL. Residues 367 to 397 are Cytoplasmic-facing; it reads AAGQSSTMTGTYAGQFVMEGFLKLRWSRFAR. Residues 398 to 415 traverse the membrane as a helical segment; the sequence is VLLTRSCAIPPTVLLAVF. Residues 416 to 426 are Extracellular-facing; the sequence is RDLQDLSGLND. The chain crosses the membrane as a helical span at residues 427–447; the sequence is LLNVLQSLLLPFAVLPILTFT. Over 448-463 the chain is Cytoplasmic; sequence SMPALMQEFANGLVSK. The chain crosses the membrane as a helical span at residues 464–485; sequence IITSSIMVLVCAVNLYFVISYV. The Extracellular segment spans residues 486 to 493; the sequence is PSLPHPAY. A helical transmembrane segment spans residues 494-513; it reads FSLVALLAAAYLGLTTYLVW. Topologically, residues 514–548 are cytoplasmic; it reads TCLITQGATRLAHSSHQRFLYGLPGEDQEEGRTSG.

Belongs to the NRAMP family.

The protein localises to the late endosome membrane. The protein resides in the lysosome membrane. The catalysed reaction is Zn(2+)(in) + H(+)(out) = Zn(2+)(out) + H(+)(in). It carries out the reaction Fe(2+)(in) + H(+)(out) = Fe(2+)(out) + H(+)(in). It catalyses the reaction Mn(2+)(in) + H(+)(out) = Mn(2+)(out) + H(+)(in). Macrophage-specific antiporter that fluxes metal ions in either direction against a proton gradient. Localized to late endosomal lysosomal membranes, delivers bivalent cations from the cytosol into these acidic compartments where they may directly affect antimicrobial activity. Involved in iron metabolism and host natural resistance to infection with intracellular parasites. Pathogen resistance involves sequestration of Fe(2+) and Mn(2+), cofactors of both prokaryotic and eukaryotic catalases and superoxide dismutases, not only to protect the macrophage against its own generation of reactive oxygen species, but to deny the cations to the pathogen for synthesis of its protective enzymes. This chain is Natural resistance-associated macrophage protein 1 (SLC11A1), found in Ovis aries (Sheep).